The sequence spans 425 residues: Raffinose permease (425 aa).

The Cytoplasmic segment spans residues 1–11; that stretch reads MNSASTHKNTD. Residues 12 to 32 form a helical membrane-spanning segment; the sequence is FWIFGLFFFLYFFIMATCFPF. At 33–48 the chain is on the periplasmic side; the sequence is LPVWLSDVVGLSKTDT. A helical transmembrane segment spans residues 49–69; it reads GIVFSCLSLFAISFQPLLGVI. Residues 70 to 78 are Cytoplasmic-facing; that stretch reads SDRLGLKKN. A helical membrane pass occupies residues 79-99; that stretch reads LIWSISLLLVFFAPFFLYVFA. Over 100 to 105 the chain is Periplasmic; the sequence is PLLHLN. A helical transmembrane segment spans residues 106–126; it reads IWAGALTGGVFIGFVFSAGAG. At 127 to 147 the chain is on the cytoplasmic side; the sequence is AIEAYIERVSRSSGFEYGKAR. The helical transmembrane segment at 148–168 threads the bilayer; the sequence is MFGCLGWALCATMAGILFNVD. Position 169 (P169) is a topological domain, periplasmic. Residues 170-190 form a helical membrane-spanning segment; that stretch reads SLVFWMGSGGALLLLLLLYLA. Residues 191–229 are Cytoplasmic-facing; it reads RPSTSQTAMVMNALGANSSLISTRMVFSLFRMRQMWMFV. Residues 230–250 traverse the membrane as a helical segment; it reads LYTIGVACVYDVFDQQFAIFF. At 251–265 the chain is on the periplasmic side; that stretch reads RSFFDTPQAGIKAFG. The chain crosses the membrane as a helical span at residues 266–286; the sequence is FATTAGEICNAIIMFCTPWII. Residues 287 to 294 are Cytoplasmic-facing; it reads NRIGAKNT. Residues 295–315 traverse the membrane as a helical segment; the sequence is LLVAGGIMTIRITGSAFATTM. T316 is a topological domain (periplasmic). The chain crosses the membrane as a helical span at residues 317–337; that stretch reads EVVILKMLHALEVPFLLVGAF. At 338–351 the chain is on the cytoplasmic side; the sequence is KYITGVFDTRLSAT. A helical transmembrane segment spans residues 352–372; it reads VYLIGFQFSKQLAAILLSTFA. At 373–383 the chain is on the periplasmic side; the sequence is GHLYDRMGFQN. A helical membrane pass occupies residues 384–404; that stretch reads TYFVLGMIVLTVTVISAFTLS. At 405–425 the chain is on the cytoplasmic side; sequence SSPGIVHPSVEKAPVAHSEIN.

This sequence belongs to the major facilitator superfamily. Oligosaccharide:H(+) symporter (OHS) (TC 2.A.1.5) family. Monomer.

The protein resides in the cell inner membrane. In terms of biological role, responsible for transport of raffinose into the cell. Can also transport lactose and melibiose. Has weak activity with maltose. The protein is Raffinose permease of Escherichia coli.